The chain runs to 638 residues: Probable potassium transport system protein Kup (638 aa).

The next 12 membrane-spanning stretches (helical) occupy residues 25-45 (LAIA…LYSL), 65-85 (VISL…LLFV), 114-134 (AGAL…DAVI), 152-172 (PHLS…LFWI), 184-204 (FGPI…YHIV), 226-246 (LLQA…AEAL), 262-282 (AYGL…ALLI), 291-311 (PFFL…STVA), 352-372 (IYVP…VVGF), 382-402 (YGIA…VVMV), 410-430 (LLVG…FGAN), and 434-454 (VAQG…LLMT).

This sequence belongs to the HAK/KUP transporter (TC 2.A.72) family.

Its subcellular location is the cell inner membrane. The catalysed reaction is K(+)(in) + H(+)(in) = K(+)(out) + H(+)(out). Functionally, transport of potassium into the cell. Likely operates as a K(+):H(+) symporter. The sequence is that of Probable potassium transport system protein Kup from Burkholderia cenocepacia (strain HI2424).